The primary structure comprises 311 residues: Dihydroorotate dehydrogenase B (NAD(+)), catalytic subunit (311 aa).

FMN is bound by residues serine 24 and 48–49; that span reads KA. Substrate-binding positions include lysine 48 and 72–76; that span reads NAIGL. Positions 104 and 132 each coordinate FMN. Asparagine 132 serves as a coordination point for substrate. The Nucleophile role is filled by cysteine 135. 2 residues coordinate FMN: lysine 170 and isoleucine 196. 197 to 198 provides a ligand contact to substrate; sequence NT. Residues glycine 222, 248–249, and 270–271 contribute to the FMN site; these read GG and GT.

This sequence belongs to the dihydroorotate dehydrogenase family. Type 1 subfamily. In terms of assembly, heterotetramer of 2 PyrK and 2 PyrD type B subunits. FMN serves as cofactor.

It is found in the cytoplasm. The enzyme catalyses (S)-dihydroorotate + NAD(+) = orotate + NADH + H(+). Its pathway is pyrimidine metabolism; UMP biosynthesis via de novo pathway; orotate from (S)-dihydroorotate (NAD(+) route): step 1/1. Its function is as follows. Catalyzes the conversion of dihydroorotate to orotate with NAD(+) as electron acceptor. The sequence is that of Dihydroorotate dehydrogenase B (NAD(+)), catalytic subunit (pyrDB) from Lactococcus lactis subsp. lactis (strain IL1403) (Streptococcus lactis).